We begin with the raw amino-acid sequence, 268 residues long: Basic endochitinase CHB4 (268 aa).

The signal sequence occupies residues 1–24 (MALTKLSLVLFLCFLGLYSETVKS). The Chitin-binding type-1 domain maps to 25–59 (QNCGCAPNLCCSQFGYCGSTDAYCGTGCRSGPCRS). 7 cysteine pairs are disulfide-bonded: Cys-27-Cys-35, Cys-29-Cys-41, Cys-34-Cys-48, Cys-52-Cys-57, Cys-92-Cys-137, Cys-150-Cys-159, and Cys-236-Cys-268. Residues 71–268 (SVGSIVTQAF…GVDPGPNLSC (198 aa)) are catalytic. Glu-132 serves as the catalytic Proton donor. N-linked (GlcNAc...) asparagine glycosylation occurs at Asn-265.

The protein belongs to the glycosyl hydrolase 19 family. Chitinase class I subfamily.

It is found in the secreted. The protein resides in the extracellular space. The enzyme catalyses Random endo-hydrolysis of N-acetyl-beta-D-glucosaminide (1-&gt;4)-beta-linkages in chitin and chitodextrins.. In terms of biological role, defense against chitin-containing fungal pathogens. This is Basic endochitinase CHB4 from Brassica napus (Rape).